The primary structure comprises 288 residues: Pantothenate synthetase (288 aa).

27–34 (MGALHEGH) contributes to the ATP binding site. The Proton donor role is filled by H34. Residues Q58 and Q150 each contribute to the (R)-pantoate site. Residue Q58 coordinates beta-alanine. Residues L173 and 181 to 184 (YSSR) contribute to the ATP site.

This sequence belongs to the pantothenate synthetase family. Homodimer.

Its subcellular location is the cytoplasm. The catalysed reaction is (R)-pantoate + beta-alanine + ATP = (R)-pantothenate + AMP + diphosphate + H(+). It participates in cofactor biosynthesis; (R)-pantothenate biosynthesis; (R)-pantothenate from (R)-pantoate and beta-alanine: step 1/1. Catalyzes the condensation of pantoate with beta-alanine in an ATP-dependent reaction via a pantoyl-adenylate intermediate. This is Pantothenate synthetase from Tropheryma whipplei (strain TW08/27) (Whipple's bacillus).